The chain runs to 356 residues: Na(+)/H(+) exchange regulatory cofactor NHE-RF1 (356 aa).

S2 is modified (N-acetylserine). A phosphoserine mark is found at S2 and S46. One can recognise a PDZ 1 domain in the interval 14–94 (LCCLEKGPNG…AVRLLVVDPE (81 aa)). A disordered region spans residues 113-142 (AQEKSEHTEPPAAADTKKAGDQNEAEKSHL). One can recognise a PDZ 2 domain in the interval 151–231 (LCTMKKGPNG…EAKLLVVDKE (81 aa)). The disordered stretch occupies residues 265–356 (NSREALVEPA…SKKNELFSNL (92 aa)). Phosphoserine is present on residues S266, S277, S287, and S288. Positions 272–288 (EPASESPRPALARSASS) are enriched in low complexity. T290 carries the post-translational modification Phosphothreonine. 2 positions are modified to phosphoserine: S291 and S299. Residues 307–317 (EPSSTSSSSDP) are compositionally biased toward low complexity. Residues 346-356 (WSKKNELFSNL) show a composition bias toward basic and acidic residues.

In terms of assembly, homodimer, and heterodimer with NHERF2. Binds the N-termini of EZR, RDX and MSN. Binds the C-termini of PDGFRA, PDGFRB, ADRB2, NOS2 and CFTR. Binds ARHGAP17, EPI64, RACK1, OPRK1, GNAQ, CTNNB1 and PLCB3. Binds PDZK1. Interacts with CLCN3. Binds the C-terminus of PAG1. In resting T-cells, part of a PAG1-NHERF1-MSN complex which is disrupted upon TCR activation. Forms a complex with CFTR and SLC4A7. Forms a complex with SLC4A7 and ATP6V1B1. Interacts with TRPC4 (via the PDZ-binding domain). Directly interacts with HTR4. Interacts (via the PDZ 1 domain) with PODXL (via the C-terminal PDZ-binding motif DTHL); interaction is not detected in glomerular epithelium cells. Interacts (via the PDZ 1 domain) with PODXL (via the C-terminal PDZ-binding motif DTHL); the interaction take place early in the secretory pathway and is necessary for its apical membrane sorting. Interacts with SLC26A3. Interacts with MCC. Interacts with SLC34A1. Interacts (via the PDZ domains) with SLC26A6 isoform 4 and isoform 5. Interacts (via PDZ domains) with ACE2 (via PDZ-binding motif); the interaction may enhance ACE2 membrane residence.

Its subcellular location is the cytoplasm. The protein resides in the apical cell membrane. The protein localises to the cell projection. It is found in the filopodium. It localises to the ruffle. Its subcellular location is the microvillus. The protein resides in the endomembrane system. Its function is as follows. Scaffold protein that connects plasma membrane proteins with members of the ezrin/moesin/radixin family and thereby helps to link them to the actin cytoskeleton and to regulate their surface expression. Necessary for recycling of internalized ADRB2. Was first known to play a role in the regulation of the activity and subcellular location of SLC9A3. Necessary for cAMP-mediated phosphorylation and inhibition of SLC9A3. Involved in sperm capacitation. May participate in the regulation of the chloride and bicarbonate homeostasis in spermatozoa. May enhance Wnt signaling. May participate in HTR4 targeting to microvilli. Involved in the regulation of phosphate reabsorption in the renal proximal tubules. The sequence is that of Na(+)/H(+) exchange regulatory cofactor NHE-RF1 (Nherf1) from Rattus norvegicus (Rat).